Consider the following 164-residue polypeptide: Neurotrophin-3 (164 aa).

The first 3 residues, 1–3, serve as a signal peptide directing secretion; sequence IQS. Positions 4–120 are excised as a propeptide; the sequence is TNMDQQGSLT…ALNRTSRRKR (117 aa). Asn-113 is a glycosylation site (N-linked (GlcNAc...) asparagine).

The protein belongs to the NGF-beta family.

It is found in the secreted. Seems to promote the survival of visceral and proprioceptive sensory neurons. The protein is Neurotrophin-3 (NTF3) of Sanzinia madagascariensis (Madagascar tree boa).